The sequence spans 867 residues: Putative tyrosine-protein kinase F09A5.2 (867 aa).

2 helical membrane-spanning segments follow: residues 45-65 and 355-375; these read VMKILSGFSLIIIVVFIFATS and LLLIIGIPCISLTICCIAFFV. N-linked (GlcNAc...) asparagine glycans are attached at residues asparagine 395 and asparagine 423. Residues 467-757 enclose the Protein kinase domain; that stretch reads VQEDHLLGNG…FNEMRGEITV (291 aa). Residue 473 to 481 coordinates ATP; the sequence is LGNGAFANV. 2 N-linked (GlcNAc...) asparagine glycosylation sites follow: asparagine 496 and asparagine 500. Position 516 (lysine 516) interacts with ATP. Asparagine 585 is a glycosylation site (N-linked (GlcNAc...) asparagine). The Proton acceptor role is filled by aspartate 626. 2 disordered regions span residues 782 to 821 and 848 to 867; these read LTMQDSKETAPCSTPGGSQDMDEDGDYDSGSEGHSQGTCA and SKSMRGKRRQSNSTVSTYQS. Residues 801–810 show a composition bias toward acidic residues; the sequence is DMDEDGDYDS. The segment covering 858 to 867 has biased composition (polar residues); it reads SNSTVSTYQS. Asparagine 859 carries N-linked (GlcNAc...) asparagine glycosylation.

It belongs to the protein kinase superfamily. Tyr protein kinase family.

Its subcellular location is the membrane. It carries out the reaction L-tyrosyl-[protein] + ATP = O-phospho-L-tyrosyl-[protein] + ADP + H(+). The protein is Putative tyrosine-protein kinase F09A5.2 of Caenorhabditis elegans.